Reading from the N-terminus, the 634-residue chain is Sodium-dependent neutral amino acid transporter B(0)AT1 (634 aa).

Topologically, residues 1–41 are cytoplasmic; sequence MVRLVLPNPGLEERIPSLDELEVIEKEEAGSRPKWDNKAQY. A Phosphoserine modification is found at Ser17. A helical membrane pass occupies residues 42–62; the sequence is MLTCVGFCVGLGNVWRFPYLC. Topologically, residues 63 to 67 are extracellular; the sequence is QSHGG. A helical transmembrane segment spans residues 68 to 88; the sequence is GAFMIPFLILLVFEGIPLLYL. At 89 to 119 the chain is on the cytoplasmic side; sequence EFAIGQRLRKGSMGVWSSIHPALKGIGIASM. Residues 120-140 form a helical membrane-spanning segment; the sequence is FVSFMVGLYYNTIIAWVMWYF. Topologically, residues 141 to 192 are extracellular; sequence FNSFQEPLPWSECPLNQNQTGYVEECAKSSSVDYFWYRETLNISTSISDSGS. N-linked (GlcNAc...) asparagine glycans are attached at residues Asn158 and Asn182. A helical transmembrane segment spans residues 193-213; sequence IQWWILLCLTCAWSVLYVCII. Topologically, residues 214-221 are cytoplasmic; it reads RGIETTGK. The helical transmembrane segment at 222–242 threads the bilayer; the sequence is AVYITSTLPYVVLTIFLIRGL. The Extracellular portion of the chain corresponds to 243 to 268; the sequence is TLKGATNGIVFLFTPNITELSNPNTW. A glycan (N-linked (GlcNAc...) asparagine) is linked at Asn258. A helical transmembrane segment spans residues 269 to 289; the sequence is LDAGAQVFYSFSLAFGGLISF. Over 290-304 the chain is Cytoplasmic; sequence SSYNSVHNNCEMDSV. A helical membrane pass occupies residues 305 to 325; the sequence is IVSVINGFTSVYAATVVYSII. Residues 326-413 lie on the Extracellular side of the membrane; the sequence is GFRATERFDD…TEAITKMPVS (88 aa). N-linked (GlcNAc...) asparagine glycans are attached at residues Asn354 and Asn368. The helical transmembrane segment at 414-434 threads the bilayer; sequence PLWSVLFFIMLFCLGLSSMFG. The Cytoplasmic portion of the chain corresponds to 435-456; that stretch reads NMEGVVVPLQDLNITPKKWPKE. A helical membrane pass occupies residues 457–477; that stretch reads LLTGLICLGTYLIAFIFTLNS. Over 478-487 the chain is Extracellular; the sequence is GQYWLSLLDS. A helical membrane pass occupies residues 488-508; it reads FAGSIPLLIIAFCEMFAVVYV. At 509-531 the chain is on the cytoplasmic side; that stretch reads YGVDRFNKDIEFMIGHKPNIFWQ. Residues 532–552 traverse the membrane as a helical segment; sequence VTWRVVSPLIMLVIFLFFFVI. The Extracellular portion of the chain corresponds to 553–581; sequence EVNKTLMYSIWDPNYEEFPKSQKIPYPNW. The N-linked (GlcNAc...) asparagine glycan is linked to Asn555. The helical transmembrane segment at 582–602 threads the bilayer; sequence VYAVVVTVAGVPCLSIPCFAI. Residues 603 to 634 are Cytoplasmic-facing; that stretch reads YKFIRNCCQKSDDHHGLVNTLSTASVNGDLKN. Residue Ser627 is modified to Phosphoserine.

Belongs to the sodium:neurotransmitter symporter (SNF) (TC 2.A.22) family. SLC6A19 subfamily. In terms of assembly, interacts in a tissue-specific manner with ACE2 in small intestine and with CLTRN in the kidney. Interacts with CLTRN; this interaction is required for trafficking of SLC6A19 to the plasma membrane and for its catalytic activation in kidneys. Interacts with ACE2; this interaction is required for trafficking of SLC6A19 to the plasma membrane and for its catalytic activation in intestine. Interacts with ANPEP; the interaction positively regulates its amino acid transporter activity. As to expression, predominantly expressed in kidney and small intestine (at protein level). Expressed in the intestinal brush border (at protein level). Expression not observed in other organs, such as lung, skeletal muscle, brain, liver and pancreas. In kidney, expression is localized in the renal cortex but not in the medulla. Substantial amounts of expression in the proximal tubules. The distal nephron segments and the glomeruli are consistently negative. In the small intestine, expression is exclusively localized in villus enterocytes. High resolution of the hybridization-positive villi reveals a gradient of expression with the highest levels in apical cells. Not detected in crypt cells or in any other cell types of the small intestine.

It is found in the cell membrane. The enzyme catalyses L-alanine(in) + Na(+)(in) = L-alanine(out) + Na(+)(out). The catalysed reaction is L-cysteine(in) + Na(+)(in) = L-cysteine(out) + Na(+)(out). It carries out the reaction L-glutamine(in) + Na(+)(in) = L-glutamine(out) + Na(+)(out). It catalyses the reaction glycine(in) + Na(+)(in) = glycine(out) + Na(+)(out). The enzyme catalyses L-isoleucine(in) + Na(+)(in) = L-isoleucine(out) + Na(+)(out). The catalysed reaction is L-leucine(in) + Na(+)(in) = L-leucine(out) + Na(+)(out). It carries out the reaction L-methionine(in) + Na(+)(in) = L-methionine(out) + Na(+)(out). It catalyses the reaction L-phenylalanine(in) + Na(+)(in) = L-phenylalanine(out) + Na(+)(out). The enzyme catalyses L-serine(in) + Na(+)(in) = L-serine(out) + Na(+)(out). The catalysed reaction is L-tryptophan(in) + Na(+)(in) = L-tryptophan(out) + Na(+)(out). It carries out the reaction L-tyrosine(in) + Na(+)(in) = L-tyrosine(out) + Na(+)(out). It catalyses the reaction L-valine(in) + Na(+)(in) = L-valine(out) + Na(+)(out). Functionally, transporter that mediates resorption of neutral amino acids across the apical membrane of renal and intestinal epithelial cells. This uptake is sodium-dependent and chloride-independent. Requires CLTRN in kidney or ACE2 in intestine for cell surface expression and amino acid transporter activity. The polypeptide is Sodium-dependent neutral amino acid transporter B(0)AT1 (Slc6a19) (Mus musculus (Mouse)).